We begin with the raw amino-acid sequence, 424 residues long: Adenylosuccinate synthetase (424 aa).

Residues 12–18 (GDEGKGK) and 40–42 (GHT) each bind GTP. The active-site Proton acceptor is aspartate 13. The Mg(2+) site is built by aspartate 13 and glycine 40. Residues 13 to 16 (DEGK), 38 to 41 (NAGH), threonine 130, arginine 144, asparagine 220, threonine 235, and arginine 299 contribute to the IMP site. The Proton donor role is filled by histidine 41. Residue 295-301 (VTTGRRR) participates in substrate binding. GTP contacts are provided by residues arginine 301, 327–329 (KLD), and 412–414 (GTG).

It belongs to the adenylosuccinate synthetase family. In terms of assembly, homodimer. Mg(2+) is required as a cofactor.

It localises to the cytoplasm. It catalyses the reaction IMP + L-aspartate + GTP = N(6)-(1,2-dicarboxyethyl)-AMP + GDP + phosphate + 2 H(+). It participates in purine metabolism; AMP biosynthesis via de novo pathway; AMP from IMP: step 1/2. In terms of biological role, plays an important role in the de novo pathway and in the salvage pathway of purine nucleotide biosynthesis. Catalyzes the first committed step in the biosynthesis of AMP from IMP. The sequence is that of Adenylosuccinate synthetase from Aspergillus clavatus (strain ATCC 1007 / CBS 513.65 / DSM 816 / NCTC 3887 / NRRL 1 / QM 1276 / 107).